The following is a 1347-amino-acid chain: Spermatogenesis-associated protein 31A1 (1347 aa).

The helical transmembrane segment at 23–43 threads the bilayer; it reads PWVLDIFLTLVFALGFFFLLL. Disordered regions lie at residues 55-89, 106-235, 373-397, 628-658, 899-955, and 1085-1160; these read PSPSPGKRKCPVGRRRRPRGRMKNHSLRAGRECPR, GPHL…STLI, EQDTTNPKPFWNMGENSKQLPGPQK, DESPGTSQAKGKPSPWQSSMSTGESSKEAQK, PRGI…REAV, and HEEP…PPSV. Positions 60–82 are enriched in basic residues; it reads GKRKCPVGRRRRPRGRMKNHSLR. Over residues 165–178 the composition is skewed to polar residues; the sequence is LASTPSPGPMTTSV. Pro residues predominate over residues 198 to 222; it reads PEPPALFPHPPHTPDPLACSPPPPK. 2 stretches are compositionally biased toward polar residues: residues 631–651 and 927–948; these read PGTSQAKGKPSPWQSSMSTGE and LTYSLTGSTQQSRSLGAQSSKA. Basic and acidic residues-rich tracts occupy residues 1108–1127 and 1137–1146; these read HKSEKSRKPNLEKHEERLEG and RKTEDTHQDE.

It belongs to the SPATA31 family.

It is found in the membrane. In terms of biological role, may play a role in spermatogenesis. This Homo sapiens (Human) protein is Spermatogenesis-associated protein 31A1.